The chain runs to 216 residues: Guanylate kinase (216 aa).

The Guanylate kinase-like domain occupies G11–L189. G18–G25 contributes to the ATP binding site.

The protein belongs to the guanylate kinase family.

The protein resides in the cytoplasm. The catalysed reaction is GMP + ATP = GDP + ADP. Essential for recycling GMP and indirectly, cGMP. The sequence is that of Guanylate kinase from Clostridium perfringens (strain SM101 / Type A).